Here is a 341-residue protein sequence, read N- to C-terminus: Basic membrane protein B (341 aa).

Residues 1 to 14 form the signal peptide; that stretch reads MRIAIFIFGILLTS. The N-palmitoyl cysteine moiety is linked to residue C15. A lipid anchor (S-diacylglycerol cysteine) is attached at C15.

Belongs to the BMP lipoprotein family. Monomer.

It localises to the cell inner membrane. Functionally, may be part of an ABC-type nucleoside uptake system involved in the purine salvage pathway. This is Basic membrane protein B (bmpB) from Borreliella afzelii (strain PKo) (Borrelia afzelii).